A 234-amino-acid polypeptide reads, in one-letter code: Sugar fermentation stimulation protein A (234 aa).

Positions 201–220 form a DNA-binding region, H-T-H motif; that stretch reads LLSEAQQRGVEILAYKAEIS.

This sequence belongs to the SfsA family.

In terms of biological role, binds to DNA non-specifically. Could be a regulatory factor involved in maltose metabolism. The protein is Sugar fermentation stimulation protein A of Shigella flexneri.